A 264-amino-acid polypeptide reads, in one-letter code: 3-methyl-2-oxobutanoate hydroxymethyltransferase (264 aa).

Mg(2+)-binding residues include Asp-45 and Asp-84. 3-methyl-2-oxobutanoate-binding positions include 45–46, Asp-84, and Lys-112; that span reads DS. Glu-114 is a binding site for Mg(2+). The Proton acceptor role is filled by Glu-181.

The protein belongs to the PanB family. In terms of assembly, homodecamer; pentamer of dimers. Requires Mg(2+) as cofactor.

The protein resides in the cytoplasm. It catalyses the reaction 3-methyl-2-oxobutanoate + (6R)-5,10-methylene-5,6,7,8-tetrahydrofolate + H2O = 2-dehydropantoate + (6S)-5,6,7,8-tetrahydrofolate. Its pathway is cofactor biosynthesis; (R)-pantothenate biosynthesis; (R)-pantoate from 3-methyl-2-oxobutanoate: step 1/2. Its function is as follows. Catalyzes the reversible reaction in which hydroxymethyl group from 5,10-methylenetetrahydrofolate is transferred onto alpha-ketoisovalerate to form ketopantoate. In Shewanella halifaxensis (strain HAW-EB4), this protein is 3-methyl-2-oxobutanoate hydroxymethyltransferase.